Consider the following 331-residue polypeptide: MVIRVGINGFGRIGRVVFRAAQRRNDIEIVGINDLLDADYMAYMLKYDSTHGRFEGAVEVQGGALVVNGKKIRVTSERDPANLKWNEINVDVVVESTGLFLSDDTARKHIQAGAKKVVITGPSKDDTPMFVMGVNHTTYKGEAIVSNASCTTNCLAPLAKVLNDKFGIVEGLMTTVHATTATQKTVDGPSQKDWRGGRGAAQNIIPSSTGAAKAVGKIIPSLNGKLTGMAFRVPTPNVSVVDLTVRLERPATYKQICDAIKAASEGELKGILGYVDEEIVSSDINGIPLTSVFDARAGISLNDNFVKLVSWYDNETGYSNKVHDLIAHITK.

Residues 12–13, aspartate 34, and arginine 78 each bind NAD(+); that span reads RI. D-glyceraldehyde 3-phosphate is bound by residues 149–151, threonine 180, 209–210, and arginine 232; these read SCT and TG. Catalysis depends on cysteine 150, which acts as the Nucleophile. Asparagine 314 serves as a coordination point for NAD(+).

The protein belongs to the glyceraldehyde-3-phosphate dehydrogenase family. Homotetramer.

It is found in the cytoplasm. It carries out the reaction D-glyceraldehyde 3-phosphate + phosphate + NAD(+) = (2R)-3-phospho-glyceroyl phosphate + NADH + H(+). The protein operates within carbohydrate degradation; glycolysis; pyruvate from D-glyceraldehyde 3-phosphate: step 1/5. The polypeptide is Glyceraldehyde-3-phosphate dehydrogenase, cytosolic (Trypanosoma brucei brucei).